The primary structure comprises 321 residues: MKRSGPFFHDVSQENLYLKSELSRCHKLISELEASYFHQKNNKLLKENTDMKEKLQQLSAELTHMSTKEKHASHTSQTLHQIRAELLDKIVVLQELLSAETYKRRAEIEEKHKLHIAKVKIEEENKNLHKRISELQASIEQEQNALLQAKQQAELIKAENGRLKEQMVEKEYQLKHIKIEVDHMKDRIIETKERLLDIEKTKEKLFHETIISYKRQLDESDAWIASHFADIDGGTKQKEKTEEEAPAAYAQPNHVETILEDVTKQIHVLQKQLAHAQSSDQAKSHTIEELKNRAAEEKPYQKWVYKLNLEKENKPSQKKPQ.

Coiled coils occupy residues 37 to 70 (FHQK…TKEK) and 108 to 205 (IEEK…KEKL). Composition is skewed to basic and acidic residues over residues 234–243 (GTKQKEKTEE) and 282–293 (AKSHTIEELKNR). Disordered regions lie at residues 234–253 (GTKQ…AQPN) and 274–293 (AHAQ…LKNR).

The polypeptide is Sporulation protein cse15 (cse15) (Bacillus subtilis (strain 168)).